We begin with the raw amino-acid sequence, 350 residues long: UDP-N-acetylenolpyruvoylglucosamine reductase (350 aa).

The FAD-binding PCMH-type domain maps to 24 to 195 (HVEATARWLL…VAVEFNLPLL (172 aa)). Arg172 is a catalytic residue. Ser245 acts as the Proton donor in catalysis. Residue Glu342 is part of the active site.

Belongs to the MurB family. FAD serves as cofactor.

The protein resides in the cytoplasm. The enzyme catalyses UDP-N-acetyl-alpha-D-muramate + NADP(+) = UDP-N-acetyl-3-O-(1-carboxyvinyl)-alpha-D-glucosamine + NADPH + H(+). Its pathway is cell wall biogenesis; peptidoglycan biosynthesis. In terms of biological role, cell wall formation. The polypeptide is UDP-N-acetylenolpyruvoylglucosamine reductase (Xanthomonas oryzae pv. oryzae (strain PXO99A)).